Reading from the N-terminus, the 602-residue chain is Glutamine--fructose-6-phosphate aminotransferase [isomerizing] (602 aa).

Cys-2 serves as the catalytic Nucleophile; for GATase activity. In terms of domain architecture, Glutamine amidotransferase type-2 spans 2-217 (CGIVGVVGNT…DQELVIVKAD (216 aa)). Residues 67–87 (IGHTRWATHGKPTEDNAHPHR) are disordered. Basic and acidic residues predominate over residues 77–87 (KPTEDNAHPHR). 2 consecutive SIS domains span residues 283–422 (IIKA…ANGN) and 455–592 (VREL…VDKP). Lys-597 serves as the catalytic For Fru-6P isomerization activity.

Homodimer.

It localises to the cytoplasm. It catalyses the reaction D-fructose 6-phosphate + L-glutamine = D-glucosamine 6-phosphate + L-glutamate. Its function is as follows. Catalyzes the first step in hexosamine metabolism, converting fructose-6P into glucosamine-6P using glutamine as a nitrogen source. The polypeptide is Glutamine--fructose-6-phosphate aminotransferase [isomerizing] (Streptococcus pneumoniae serotype 4 (strain ATCC BAA-334 / TIGR4)).